The following is a 270-amino-acid chain: MTVNTKTYSERAETHASPVAQRLFRLMESKKTNLCASIDVDTTKEFLELIDKLGPYVCLIKTHIDIINDFSYESTIEPLLGLSRKHQFMIFEDRKFADIGNTVKKQYIGGVYKISSWADITNAHGVTGNGVVEGLKQGAKETTTNQEPRGLLMLAELSSVGSLAYGEYSQKTVEIAKSDKEFVVGFIAQRDMGGQEEGFDWLIMTPGVGLDDKGDGLGQQYRTVDEVVSTGTDIIIVGRGLFGKGRDPDIEGKRYRDAGWNAYLKKTGQL.

Residues Asp39, Lys61–His63, Asp93–Thr102, Tyr221, and Arg239 each bind substrate. Lys95 acts as the Proton donor in catalysis.

This sequence belongs to the OMP decarboxylase family.

The catalysed reaction is orotidine 5'-phosphate + H(+) = UMP + CO2. The protein operates within pyrimidine metabolism; UMP biosynthesis via de novo pathway; UMP from orotate: step 2/2. This chain is Orotidine 5'-phosphate decarboxylase (URA3), found in Candida albicans (strain SC5314 / ATCC MYA-2876) (Yeast).